A 348-amino-acid chain; its full sequence is Erythronate-4-phosphate dehydrogenase (348 aa).

2 residues coordinate substrate: Thr-46 and Thr-67. Position 147 (Asp-147) interacts with NAD(+). Arg-209 is an active-site residue. Residue Asp-233 coordinates NAD(+). Glu-238 is an active-site residue. His-255 acts as the Proton donor in catalysis. An NAD(+)-binding site is contributed by Gly-258. Tyr-259 lines the substrate pocket.

The protein belongs to the D-isomer specific 2-hydroxyacid dehydrogenase family. PdxB subfamily. As to quaternary structure, homodimer.

It localises to the cytoplasm. The enzyme catalyses 4-phospho-D-erythronate + NAD(+) = (R)-3-hydroxy-2-oxo-4-phosphooxybutanoate + NADH + H(+). It participates in cofactor biosynthesis; pyridoxine 5'-phosphate biosynthesis; pyridoxine 5'-phosphate from D-erythrose 4-phosphate: step 2/5. Its function is as follows. Catalyzes the oxidation of erythronate-4-phosphate to 3-hydroxy-2-oxo-4-phosphonooxybutanoate. This Bacteroides thetaiotaomicron (strain ATCC 29148 / DSM 2079 / JCM 5827 / CCUG 10774 / NCTC 10582 / VPI-5482 / E50) protein is Erythronate-4-phosphate dehydrogenase.